We begin with the raw amino-acid sequence, 300 residues long: MTSRPRSRRAVNLQILPSSMTVLSICAGLTSIRFALEHQPKAAIALIAAAAILDGLDGRVARILGAESRMGEEIDSLADAVNFGVAPAVVLYATMLSTTPVGWVAVLLYPVCVVLRLARFNALLDDGTQPAYTREFFVGMPAPAGAVSVIGLLALKLQFGAGWWTSTWFLCIWVTGTSMLLISRIPMKKMHTVSVPPHYAAVFVAMLAIFAAAVVLAPYLLIWVIILTYLCHIPFAIHNQRWLAAHPEAWDDKFKQQHDARRAARRACPNRHAVPRLGLLKPGSRSMVRSGLRKPGRRFI.

6 helical membrane-spanning segments follow: residues 10-30 (AVNL…AGLT), 74-94 (IDSL…LYAT), 95-115 (MLST…CVVL), 135-155 (EFFV…LLAL), 162-182 (GWWT…MLLI), and 207-227 (LAIF…VIIL).

Belongs to the CDP-alcohol phosphatidyltransferase class-I family.

Its subcellular location is the cell membrane. The catalysed reaction is a CDP-1,2-diacyl-sn-glycerol + L-serine = a 1,2-diacyl-sn-glycero-3-phospho-L-serine + CMP + H(+). The sequence is that of CDP-diacylglycerol--serine O-phosphatidyltransferase (pssA) from Mycobacterium leprae (strain TN).